The sequence spans 399 residues: Acetate kinase (399 aa).

Asn-7 lines the Mg(2+) pocket. An ATP-binding site is contributed by Lys-14. Arg-89 lines the substrate pocket. Asp-146 acts as the Proton donor/acceptor in catalysis. ATP contacts are provided by residues 206-210, 280-282, and 328-332; these read HLGNG, DMR, and GIGEN. Glu-382 provides a ligand contact to Mg(2+).

It belongs to the acetokinase family. Homodimer. The cofactor is Mg(2+). It depends on Mn(2+) as a cofactor.

The protein localises to the cytoplasm. The enzyme catalyses acetate + ATP = acetyl phosphate + ADP. It participates in metabolic intermediate biosynthesis; acetyl-CoA biosynthesis; acetyl-CoA from acetate: step 1/2. Catalyzes the formation of acetyl phosphate from acetate and ATP. Can also catalyze the reverse reaction. The chain is Acetate kinase from Campylobacter fetus subsp. fetus (strain 82-40).